Consider the following 448-residue polypeptide: Ribosomal protein uS12 methylthiotransferase RimO (448 aa).

Positions Pro-16–Pro-126 constitute an MTTase N-terminal domain. The [4Fe-4S] cluster site is built by Cys-25, Cys-61, Cys-90, Cys-157, Cys-161, and Cys-164. Positions Leu-143 to Arg-380 constitute a Radical SAM core domain. Residues Arg-383–Val-448 form the TRAM domain.

It belongs to the methylthiotransferase family. RimO subfamily. Requires [4Fe-4S] cluster as cofactor.

Its subcellular location is the cytoplasm. It catalyses the reaction L-aspartate(89)-[ribosomal protein uS12]-hydrogen + (sulfur carrier)-SH + AH2 + 2 S-adenosyl-L-methionine = 3-methylsulfanyl-L-aspartate(89)-[ribosomal protein uS12]-hydrogen + (sulfur carrier)-H + 5'-deoxyadenosine + L-methionine + A + S-adenosyl-L-homocysteine + 2 H(+). Its function is as follows. Catalyzes the methylthiolation of an aspartic acid residue of ribosomal protein uS12. The protein is Ribosomal protein uS12 methylthiotransferase RimO of Methylorubrum extorquens (strain PA1) (Methylobacterium extorquens).